The primary structure comprises 435 residues: MLDSKLLRAELDETAAKLARRGFPLDVETIRELEEKRKSLQMKTEELQALRNSRSKSIGQAKAKGDHEEAERILAEVGNLGAELDQAKVTLAELQSELETITMSIPNLPDAEVPDGKDEDDNVEVSRWGQPKTYDFEVKDHVDLGEMSGGLDFASAVKISGSRFIVMKGKFARLHRAIAQFMLDLHTDEHGYTEMYVPYLVNHDSLYGTGQLPKFGEDLFHTSPLTEQVSDVPLKTLSLIPTAEVPVTNMVRDTITDEAELPLKMTAHTPCFRSEAGSYGRDTRGLIRMHQFDKVELVQITKPEDSMAALEELTGHAEKVLQLLELPYRKVILCTGDMGFGSAKTYDLEVWVPAQETYREISSCSNMWDFQARRMQARFRRKGEKKPELVHTLNGSGLAVGRTMVAILENNQEADGRIAIPTVLQPYMGGVTHIG.

242–244 lines the L-serine pocket; that stretch reads TAE. 273–275 provides a ligand contact to ATP; the sequence is RSE. Glu-296 is a binding site for L-serine. Position 360 to 363 (360 to 363) interacts with ATP; sequence EISS. Ser-396 contacts L-serine.

It belongs to the class-II aminoacyl-tRNA synthetase family. Type-1 seryl-tRNA synthetase subfamily. As to quaternary structure, homodimer. The tRNA molecule binds across the dimer.

It localises to the cytoplasm. It carries out the reaction tRNA(Ser) + L-serine + ATP = L-seryl-tRNA(Ser) + AMP + diphosphate + H(+). The enzyme catalyses tRNA(Sec) + L-serine + ATP = L-seryl-tRNA(Sec) + AMP + diphosphate + H(+). It functions in the pathway aminoacyl-tRNA biosynthesis; selenocysteinyl-tRNA(Sec) biosynthesis; L-seryl-tRNA(Sec) from L-serine and tRNA(Sec): step 1/1. Its function is as follows. Catalyzes the attachment of serine to tRNA(Ser). Is also able to aminoacylate tRNA(Sec) with serine, to form the misacylated tRNA L-seryl-tRNA(Sec), which will be further converted into selenocysteinyl-tRNA(Sec). In Vibrio atlanticus (strain LGP32) (Vibrio splendidus (strain Mel32)), this protein is Serine--tRNA ligase.